The primary structure comprises 262 residues: uncharacterized protein (262 aa).

Transmembrane regions (helical) follow at residues 42-62, 71-91, 115-135, 145-165, 185-205, 206-226, and 235-255; these read IAKF…TVLN, IINI…LLYF, IGLA…MELI, VVSY…CCFN, LWAY…YSNH, PLMI…PFMI, and AYPS…NYAI.

Its subcellular location is the membrane. This is an uncharacterized protein from Acanthamoeba polyphaga mimivirus (APMV).